Consider the following 356-residue polypeptide: MTRLTLALDVMGGDFGPSVTVPAALQALNSNSQLTLLLVGNPDAITPLLAKADFEQRSRLQIIPAQSVIASDARPSQAIRASRGSSMRVALELVKEGRAQACVSAGNTGALMGLAKLLLKPLEGIERPALVTVLPHQQKGKTVVLDLGANVDCDSTMLVQFAIMGSVLAEEVVEIPNPRVALLNIGEEEVKGLDSIRDASAVLKTIPSINYIGYLEANELLTGKTDVLVCDGFTGNVTLKTMEGVVRMFLSLLKSQGEGKKRSWWLLLLKRWLQKSLTRRFSHLNPDQYNGACLLGLRGTVIKSHGAANQRAFAVAIEQAVQAVQRQVPQRIAARLESVYPAGFELLDGGKSGTLR.

Belongs to the PlsX family. Homodimer. Probably interacts with PlsY.

Its subcellular location is the cytoplasm. The catalysed reaction is a fatty acyl-[ACP] + phosphate = an acyl phosphate + holo-[ACP]. It participates in lipid metabolism; phospholipid metabolism. Catalyzes the reversible formation of acyl-phosphate (acyl-PO(4)) from acyl-[acyl-carrier-protein] (acyl-ACP). This enzyme utilizes acyl-ACP as fatty acyl donor, but not acyl-CoA. This Shigella sonnei (strain Ss046) protein is Phosphate acyltransferase.